The sequence spans 450 residues: NADP-specific glutamate dehydrogenase (450 aa).

Residue K114 is part of the active site.

The protein belongs to the Glu/Leu/Phe/Val dehydrogenases family. As to quaternary structure, homohexamer.

The enzyme catalyses L-glutamate + NADP(+) + H2O = 2-oxoglutarate + NH4(+) + NADPH + H(+). This chain is NADP-specific glutamate dehydrogenase (gdhA), found in Botryotinia fuckeliana (Noble rot fungus).